Here is a 1170-residue protein sequence, read N- to C-terminus: Chromosome partition protein Smc (1170 aa).

Residue 32–39 (PNGCGKSN) coordinates ATP. Coiled-coil stretches lie at residues 169–215 (GVSK…AVVA), 245–365 (DRQR…DAAA), and 401–508 (EAAH…TQGK). The region spanning 520 to 623 (ALPRLWKKLH…VADDLAQALA (104 aa)) is the SMC hinge domain. Coiled-coil stretches lie at residues 664-944 (QEIE…KEKL) and 983-1020 (ERKV…LQAT).

It belongs to the SMC family. As to quaternary structure, homodimer.

Its subcellular location is the cytoplasm. In terms of biological role, required for chromosome condensation and partitioning. The chain is Chromosome partition protein Smc from Burkholderia pseudomallei (strain 1710b).